The chain runs to 123 residues: Holo-[acyl-carrier-protein] synthase (123 aa).

Mg(2+) contacts are provided by Asp7 and Glu56.

This sequence belongs to the P-Pant transferase superfamily. AcpS family. The cofactor is Mg(2+).

It localises to the cytoplasm. The enzyme catalyses apo-[ACP] + CoA = holo-[ACP] + adenosine 3',5'-bisphosphate + H(+). Its function is as follows. Transfers the 4'-phosphopantetheine moiety from coenzyme A to a Ser of acyl-carrier-protein. This is Holo-[acyl-carrier-protein] synthase from Carboxydothermus hydrogenoformans (strain ATCC BAA-161 / DSM 6008 / Z-2901).